Reading from the N-terminus, the 497-residue chain is Putative zinc finger and SCAN domain-containing protein 5D (497 aa).

The 83-residue stretch at 41–123 (KAGRRMFSCP…DLLRNNRRPK (83 aa)) folds into the SCAN box domain. The tract at residues 148-342 (PASVRDDPRG…GPAGAVSHPN (195 aa)) is disordered. The span at 158 to 167 (VSSQRASSVN) shows a compositional bias: polar residues. Composition is skewed to basic and acidic residues over residues 216–229 (PTLE…REEN) and 249–259 (KEGKEPKKRAS). C2H2-type zinc fingers lie at residues 352-374 (FACG…MRSH), 380-402 (FQCN…QRIH), 408-430 (YTCD…KRSH), 436-458 (YKCK…KLIH), and 464-486 (YKCP…QKTH).

It localises to the nucleus. The protein is Putative zinc finger and SCAN domain-containing protein 5D of Homo sapiens (Human).